Consider the following 188-residue polypeptide: Ion-translocating oxidoreductase complex subunit B (188 aa).

Residues 1–23 (MIEAAVSMSALGLGLGLLLGVAA) are hydrophobic. The 4Fe-4S domain occupies 29-88 (ESPPILDAIEGILPGTNCGACGYPGCRGLAEAMSEGAAPVTACAPGGRDVALALAAIVET). Cys46, Cys49, Cys54, Cys71, Cys113, Cys116, Cys119, Cys123, Cys143, Cys146, Cys149, and Cys153 together coordinate [4Fe-4S] cluster. 2 consecutive 4Fe-4S ferredoxin-type domains span residues 104-133 (TVAFIFEDHCTGCMRCFKRCPTDAIIGANR) and 134-163 (QIHTVVTDACIGCNACIEACPTEAIVARVK).

The protein belongs to the 4Fe4S bacterial-type ferredoxin family. RnfB subfamily. In terms of assembly, the complex is composed of six subunits: RnfA, RnfB, RnfC, RnfD, RnfE and RnfG. [4Fe-4S] cluster is required as a cofactor.

The protein localises to the cellular chromatophore membrane. In terms of biological role, part of a membrane-bound complex that couples electron transfer with translocation of ions across the membrane. The sequence is that of Ion-translocating oxidoreductase complex subunit B from Cereibacter sphaeroides (strain ATCC 17029 / ATH 2.4.9) (Rhodobacter sphaeroides).